The chain runs to 537 residues: Organic anion transporter 3 (537 aa).

Topologically, residues 1–11 are cytoplasmic; it reads MTFSEILDRVG. Ser4 carries the post-translational modification Phosphoserine. The helical transmembrane segment at 12–32 threads the bilayer; that stretch reads SMGPFQYLHVTLLALPILGIA. Residues 33-123 are Extracellular-facing; that stretch reads NHNLLQIFTA…LVCGSNKLKE (91 aa). A glycan (N-linked (GlcNAc...) asparagine) is linked at Asn81. The helical transmembrane segment at 124-144 threads the bilayer; sequence MAQSVFMAGILVGGPVFGELS. The Cytoplasmic segment spans residues 145–150; the sequence is DRFGRK. A helical membrane pass occupies residues 151 to 171; it reads PILTWSYLLLAASGSSAAFSP. Residues 172–176 are Extracellular-facing; sequence SLTVY. Residues 177–197 form a helical membrane-spanning segment; it reads MIFRFLCGCSISGISLSTIIL. Residues 198 to 212 lie on the Cytoplasmic side of the membrane; sequence NVEWVPTSTRAISST. A helical transmembrane segment spans residues 213 to 233; the sequence is TIGYCYTIGQFILPGLAYAVP. Over 234–236 the chain is Extracellular; it reads QWR. Residues 237–257 form a helical membrane-spanning segment; it reads WLQLSVSAAFFIFSLLSWWVP. Residues 258-327 lie on the Cytoplasmic side of the membrane; sequence ESIRWLVLSG…FRVSILRRVT (70 aa). The helical transmembrane segment at 328 to 348 threads the bilayer; it reads FCLSLAWFATGFAYYSLAMGV. At 349 to 354 the chain is on the extracellular side; the sequence is EEFGVN. The helical transmembrane segment at 355 to 375 threads the bilayer; the sequence is IYILQIIFGGVDIPAKFITIL. Over 376–383 the chain is Cytoplasmic; the sequence is SISYLGRR. A helical membrane pass occupies residues 384–404; that stretch reads ITQGFLLILAGVAILALIFVS. Over 405–411 the chain is Extracellular; that stretch reads SEMQLLR. A helical membrane pass occupies residues 412-432; it reads TALAVFGKGCLSGSFSCLFLY. Residues 433–471 are Cytoplasmic-facing; that stretch reads TSELYPTVLRQTGMGISNIWARVGSMIAPLVKITGELQP. A helical membrane pass occupies residues 472–492; that stretch reads FIPNVIFGTMTLLGGSAAFFL. Topologically, residues 493–537 are extracellular; that stretch reads LETLNRPLPETIEDIQDWYQQTKKTKQEPEAEKASQTIPLKTGGP. Residues 513-537 are disordered; it reads QTKKTKQEPEAEKASQTIPLKTGGP.

Belongs to the major facilitator (TC 2.A.1) superfamily. Organic cation transporter (TC 2.A.1.19) family. Expressed mainly in kidney. In kidney, detected in almost all parts of the nephron, including macula densa cells. Expressed (at protein level) throughout the renal cortex. Widely distributed in the brain with no large regional differences. Expressed in the choroid plexus (CP, located in the ventricles of the brain). Expressed in developing bone. Weakly expressed in brain and eye.

It is found in the basolateral cell membrane. It carries out the reaction estrone 3-sulfate(out) + glutarate(in) = estrone 3-sulfate(in) + glutarate(out). The catalysed reaction is estrone 3-sulfate(in) + 2-oxoglutarate(out) = estrone 3-sulfate(out) + 2-oxoglutarate(in). The enzyme catalyses taurocholate(out) + glutarate(in) = taurocholate(in) + glutarate(out). It catalyses the reaction dehydroepiandrosterone 3-sulfate(out) + glutarate(in) = dehydroepiandrosterone 3-sulfate(in) + glutarate(out). It carries out the reaction glutarate(in) + 2-oxoglutarate(out) = glutarate(out) + 2-oxoglutarate(in). The catalysed reaction is urate(in) + 2-oxoglutarate(out) = urate(out) + 2-oxoglutarate(in). The enzyme catalyses prostaglandin F2alpha(out) + glutarate(in) = prostaglandin F2alpha(in) + glutarate(out). It catalyses the reaction prostaglandin F2alpha(out) + 2-oxoglutarate(in) = prostaglandin F2alpha(in) + 2-oxoglutarate(out). It carries out the reaction (R)-carnitine(out) + 2-oxoglutarate(in) = (R)-carnitine(in) + 2-oxoglutarate(out). The catalysed reaction is glutarate(in) + (R)-carnitine(out) = glutarate(out) + (R)-carnitine(in). The enzyme catalyses prostaglandin E2(out) + 2-oxoglutarate(in) = prostaglandin E2(in) + 2-oxoglutarate(out). It catalyses the reaction prostaglandin E2(out) + glutarate(in) = prostaglandin E2(in) + glutarate(out). It carries out the reaction urate(in) + glutarate(out) = urate(out) + glutarate(in). The catalysed reaction is taurocholate(out) + 2-oxoglutarate(in) = taurocholate(in) + 2-oxoglutarate(out). The enzyme catalyses dehydroepiandrosterone 3-sulfate(out) + 2-oxoglutarate(in) = dehydroepiandrosterone 3-sulfate(in) + 2-oxoglutarate(out). It catalyses the reaction kynurenate(out) + a dicarboxylate(in) = kynurenate(in) + a dicarboxylate(out). It carries out the reaction (indol-3-yl)acetate(out) + a dicarboxylate(in) = (indol-3-yl)acetate(in) + a dicarboxylate(out). The catalysed reaction is indoxyl sulfate(out) + a dicarboxylate(in) = indoxyl sulfate(in) + a dicarboxylate(out). The enzyme catalyses N-benzoylglycine(out) + a dicarboxylate(in) = N-benzoylglycine(in) + a dicarboxylate(out). It catalyses the reaction 3-carboxy-4-methyl-5-propyl-2-furanpropanoate(out) + a dicarboxylate(in) = 3-carboxy-4-methyl-5-propyl-2-furanpropanoate(in) + a dicarboxylate(out). It carries out the reaction (6R)-L-erythro-5,6,7,8-tetrahydrobiopterin(out) + a dicarboxylate(in) = (6R)-L-erythro-5,6,7,8-tetrahydrobiopterin(in) + a dicarboxylate(out). The catalysed reaction is L-erythro-7,8-dihydrobiopterin(out) + a dicarboxylate(in) = L-erythro-7,8-dihydrobiopterin(in) + a dicarboxylate(out). The enzyme catalyses L-sepiapterin(out) + a dicarboxylate(in) = L-sepiapterin(in) + a dicarboxylate(out). Its activity is regulated as follows. Expression inhibited by androgens such as testosterone. Functions as an organic anion/dicarboxylate exchanger that couples organic anion uptake indirectly to the sodium gradient. Transports organic anions such as estrone 3-sulfate (E1S) and urate in exchange for dicarboxylates such as glutarate or ketoglutarate (2-oxoglutarate). Plays an important role in the excretion of endogenous and exogenous organic anions, especially from the kidney and the brain. E1S transport is pH- and chloride-dependent and may also involve E1S/cGMP exchange. Responsible for the transport of prostaglandin E2 (PGE2) and prostaglandin F2(alpha) (PGF2(alpha)) in the basolateral side of the renal tubule. Involved in the transport of neuroactive tryptophan metabolites kynurenate and xanthurenate. Functions as a biopterin transporters involved in the uptake and the secretion of coenzymes tetrahydrobiopterin (BH4), dihydrobiopterin (BH2) and sepiapterin to urine, thereby determining baseline levels of blood biopterins. May be involved in the basolateral transport of steviol, a metabolite of the popular sugar substitute stevioside. May participate in the detoxification/ renal excretion of drugs and xenobiotics, such as the histamine H(2)-receptor antagonists fexofenadine and cimetidine, the antibiotic benzylpenicillin (PCG), the anionic herbicide 2,4-dichloro-phenoxyacetate (2,4-D), the diagnostic agent p-aminohippurate (PAH), the antiviral acyclovir (ACV), and the mycotoxin ochratoxin (OTA), by transporting these exogenous organic anions across the cell membrane in exchange for dicarboxylates such as 2-oxoglutarate. May contribute to the release of cortisol in the adrenals. Involved in one of the detoxification systems on the choroid plexus (CP), removes substrates such as E1S or taurocholate (TC), PCG, 2,4-D and PAH, from the cerebrospinal fluid (CSF) to the blood for eventual excretion in urine and bile. Also contributes to the uptake of several other organic compounds such as the prostanoids prostaglandin E(2) and prostaglandin F(2-alpha), L-carnitine, and the therapeutic drugs allopurinol, 6-mercaptopurine (6-MP) and 5-fluorouracil (5-FU). Mediates the transport of PAH, PCG, and the statins pravastatin and pitavastatin, from the cerebrum into the blood circulation across the blood-brain barrier (BBB). Contributes to the renal uptake of potent uremic toxins (indoxyl sulfate (IS), indole acetate (IA), hippurate/N-benzoylglycine (HA) and 3-carboxy-4-methyl-5-propyl-2-furanpropionate (CMPF)), pravastatin, PCG, E1S and dehydroepiandrosterone sulfate (DHEAS), and is partly involved in the renal uptake of temocaprilat (an angiotensin-converting enzyme (ACE) inhibitor). In summary, plays a role in the efflux of drugs and xenobiotics, helping reduce their undesired toxicological effects on the body. The protein is Organic anion transporter 3 (Slc22a8) of Mus musculus (Mouse).